A 106-amino-acid chain; its full sequence is Iron-sulfur cluster assembly protein CyaY (106 aa).

The protein belongs to the frataxin family.

In terms of biological role, involved in iron-sulfur (Fe-S) cluster assembly. May act as a regulator of Fe-S biogenesis. This Escherichia coli (strain SMS-3-5 / SECEC) protein is Iron-sulfur cluster assembly protein CyaY.